Reading from the N-terminus, the 570-residue chain is MSEKHPGPLVVEGKLTDAERMKLESNYLRGTIAEDLNDGLTGGFKGDNFLLIRFHGMYQQDDRDIRAERAEQKLEPRHAMLLRCRLPGGVITTKQWQAIDKFAGENTIYGSIRLTNRQTFQFHGILKKNVKPVHQMLHSVGLDALATANDMNRNVLCTSNPYESQLHAEAYEWAKKISEHLLPRTRAYAEIWLDQEKVATTDEEPILGQTYLPRKFKTTVVIPPQNDIDLHANDMNFVAIAENGKLVGFNLLVGGGLSIEHGNKKTYARTASEFGYLPLEHTLAVAEAVVTTQRDWGNRTDRKNAKTKYTLERVGVETFKAEVERRAGIKFEPIRPYEFTGRGDRIGWVKGIDDNWHLTLFIENGRILDYPGRPLKTGLLEIAKIHKGDFRITANQNLIIAGVPESEKAKIEKIAKESGLMNAVTPQRENSMACVSFPTCPLAMAEAERFLPSFIDNIDNLMAKHGVSDEHIVMRVTGCPNGCGRAMLAEVGLVGKAPGRYNLHLGGNRIGTRIPRMYKENITESEILASLDELIGRWAKEREVGEGFGDFTVRAGIIRPVLDPARDLWD.

Positions 434, 440, 479, and 483 each coordinate [4Fe-4S] cluster. A siroheme-binding site is contributed by Cys-483.

The protein belongs to the nitrite and sulfite reductase 4Fe-4S domain family. In terms of assembly, alpha(8)-beta(8). The alpha component is a flavoprotein, the beta component is a hemoprotein. Siroheme is required as a cofactor. Requires [4Fe-4S] cluster as cofactor.

The enzyme catalyses hydrogen sulfide + 3 NADP(+) + 3 H2O = sulfite + 3 NADPH + 4 H(+). It participates in sulfur metabolism; hydrogen sulfide biosynthesis; hydrogen sulfide from sulfite (NADPH route): step 1/1. In terms of biological role, component of the sulfite reductase complex that catalyzes the 6-electron reduction of sulfite to sulfide. This is one of several activities required for the biosynthesis of L-cysteine from sulfate. This is Sulfite reductase [NADPH] hemoprotein beta-component from Escherichia coli O127:H6 (strain E2348/69 / EPEC).